Here is a 522-residue protein sequence, read N- to C-terminus: BAR/IMD domain-containing adapter protein 2-like 2 (522 aa).

The region spanning Met1 to Leu239 is the IMD domain. 2 disordered regions span residues Ser220–Gly325 and Pro404–Pro502. Phosphoserine occurs at positions 231, 272, and 303. The span at Arg297 to Phe317 shows a compositional bias: polar residues. The 64-residue stretch at Gly324–Glu387 folds into the SH3 domain. Residues Ser443–Arg456 show a composition bias toward low complexity. The span at Ala457–Pro466 shows a compositional bias: pro residues. Ser472 and Ser475 each carry phosphoserine.

Expressed in the epithelial layer of the intestine and in the kidney.

It localises to the cell membrane. The protein localises to the cell junction. The protein resides in the cytoplasmic vesicle membrane. Phosphoinositides-binding protein that induces the formation of planar or gently curved membrane structures. Binds to phosphoinositides, including to phosphatidylinositol 4,5-bisphosphate (PtdIns(4,5)P2) headgroups. There seems to be no clear preference for a specific phosphoinositide. The polypeptide is BAR/IMD domain-containing adapter protein 2-like 2 (Baiap2l2) (Mus musculus (Mouse)).